Consider the following 100-residue polypeptide: uncharacterized protein (100 aa).

Lys-98 participates in a covalent cross-link: Isoglutamyl lysine isopeptide (Lys-Gln) (interchain with Q-Cter in protein Pup).

This is an uncharacterized protein from Mycobacterium tuberculosis (strain CDC 1551 / Oshkosh).